Here is a 380-residue protein sequence, read N- to C-terminus: Methylthioribose-1-phosphate isomerase (380 aa).

Asp-257 (proton donor) is an active-site residue.

The protein belongs to the eIF-2B alpha/beta/delta subunits family. MtnA subfamily.

Its subcellular location is the cytoplasm. The protein localises to the nucleus. The catalysed reaction is 5-(methylsulfanyl)-alpha-D-ribose 1-phosphate = 5-(methylsulfanyl)-D-ribulose 1-phosphate. The protein operates within amino-acid biosynthesis; L-methionine biosynthesis via salvage pathway; L-methionine from S-methyl-5-thio-alpha-D-ribose 1-phosphate: step 1/6. Catalyzes the interconversion of methylthioribose-1-phosphate (MTR-1-P) into methylthioribulose-1-phosphate (MTRu-1-P). The protein is Methylthioribose-1-phosphate isomerase of Naegleria gruberi (Amoeba).